We begin with the raw amino-acid sequence, 242 residues long: Arginine transport ATP-binding protein ArtP (242 aa).

Positions 3-241 (IQLNGINCFY…QTEAFKNYLS (239 aa)) constitute an ABC transporter domain. Residue 35–42 (GPSGAGKS) participates in ATP binding.

It belongs to the ABC transporter superfamily. The complex is composed of two ATP-binding proteins (ArtP), two transmembrane proteins (ArtM and ArtQ) and two solute-binding proteins (ArtJ and ArtI).

Its subcellular location is the cell inner membrane. The catalysed reaction is a polar amino acid(out) + ATP + H2O = a polar amino acid(in) + ADP + phosphate + H(+). The enzyme catalyses L-arginine(out) + ATP + H2O = L-arginine(in) + ADP + phosphate + H(+). Functionally, part of the ABC transporter complex ArtPIQMJ involved in arginine transport. Probably responsible for energy coupling to the transport system. This is Arginine transport ATP-binding protein ArtP (artP) from Escherichia coli O157:H7.